Here is a 374-residue protein sequence, read N- to C-terminus: 12-oxophytodienoate reductase 2 (374 aa).

An N-acetylmethionine modification is found at M1. FMN-binding positions include 33–35, A66, and Q108; that span reads PLT. Residue H185 participates in substrate binding. The Proton donor role is filled by Y190. R237 serves as a coordination point for FMN. R277 contacts substrate. FMN is bound by residues 305-307 and 328-329; these read AGG and GR.

The protein belongs to the NADH:flavin oxidoreductase/NADH oxidase family. The cofactor is FMN. Expressed at highest levels in roots and cotyledons, and at lower levels in leaves, shoots and flowers (sepals, petals, maturing siliques and developing pollen).

It is found in the cytoplasm. The catalysed reaction is (1S,2S)-OPC-8 + NADP(+) = (9S,13S,15Z)-12-oxophyto-10,15-dienoate + NADPH + H(+). It catalyses the reaction a 4,5-didehydrojasmonate + NADPH + H(+) = a jasmonate + NADP(+). The protein operates within lipid metabolism; oxylipin biosynthesis. Functionally, specifically cleaves olefinic bonds in alpha,beta-unsaturated carbonyls and may be involved in detoxification or modification of these reactive compounds. May be involved in the biosynthesis or metabolism of oxylipin signaling molecules. In vitro, reduces 9R,13R-12-oxophytodienoic acid (9R,13R-OPDA) to 9R,13R-OPC-8:0, but only poorly 9S,13S-OPDA, the natural precursor of jasmonic acid (JA). Can detoxify the explosive 2,4,6-trinitrotoluene (TNT) in vitro and in vivo by catalyzing its nitroreduction to form hydroxylamino-dinitrotoluene (HADNT). Functions in an alternative and OPR3-independent pathway for JA biosynthesis. Catalyzes the NADPH-dependent reduction of 4,5-didehydrojasmonates to jasmonates. In Arabidopsis thaliana (Mouse-ear cress), this protein is 12-oxophytodienoate reductase 2.